A 551-amino-acid polypeptide reads, in one-letter code: E-selectin (551 aa).

A signal peptide spans 1 to 23 (MVASWLLSTLTFALVLLIKETST). Residues 24 to 141 (WTYHFSAENM…CSKKKLALCY (118 aa)) form the C-type lectin domain. Residues 24–495 (WTYHFSAENM…CEEPIASNVP (472 aa)) lie on the Extracellular side of the membrane. Residues Asn-32 and Asn-45 are each glycosylated (N-linked (GlcNAc...) asparagine). Disulfide bonds link Cys-42–Cys-140, Cys-113–Cys-132, Cys-145–Cys-156, Cys-150–Cys-165, Cys-167–Cys-176, Cys-182–Cys-226, Cys-195–Cys-208, Cys-212–Cys-239, Cys-244–Cys-288, Cys-257–Cys-270, Cys-274–Cys-301, Cys-306–Cys-351, Cys-337–Cys-364, Cys-369–Cys-414, Cys-400–Cys-427, Cys-432–Cys-473, and Cys-459–Cys-486. Residues Glu-103, Asn-105, and Glu-111 each coordinate Ca(2+). A carbohydrate is bound by residues 103–111 (EPNNKQNNE), 115–120 (EIYIKR), and 128–130 (NDE). The Ca(2+) site is built by Asn-128 and Asp-129. In terms of domain architecture, EGF-like spans 142–177 (TAACTEASCSGHGECIETINNYSCKCYPGFSGLKCE). Asn-162 carries N-linked (GlcNAc...) asparagine glycosylation. 5 consecutive Sushi domains span residues 180–241 (VTCE…TCKV), 242–303 (VECD…TCKA), 305–366 (SCDT…VCEA), 368–429 (KCDP…SCQV), and 430–488 (VQCP…TCEE). Residues Asn-194, Asn-201, and Asn-205 are each glycosylated (N-linked (GlcNAc...) asparagine). A glycan (N-linked (GlcNAc...) asparagine) is linked at Asn-267. Residues Asn-314, Asn-321, and Asn-334 are each glycosylated (N-linked (GlcNAc...) asparagine). Residues Asn-442 and Asn-466 are each glycosylated (N-linked (GlcNAc...) asparagine). The chain crosses the membrane as a helical span at residues 496-517 (LAVGLSVSGTSFLTLTSFLLWF). The Cytoplasmic portion of the chain corresponds to 518–551 (LKYFRKKAKKFVPASSRYVGLEAHGNCQVPSHLI).

Belongs to the selectin/LECAM family. As to quaternary structure, interacts with SELPLG/PSGL1 and PODXL2 through the sialyl Lewis X epitope. SELPLG sulfation appears not to be required for this interaction.

The protein resides in the cell membrane. In terms of biological role, cell-surface glycoprotein having a role in immunoadhesion. Mediates in the adhesion of blood neutrophils in cytokine-activated endothelium through interaction with SELPLG/PSGL1. May have a role in capillary morphogenesis. The sequence is that of E-selectin (SELE) from Oryctolagus cuniculus (Rabbit).